We begin with the raw amino-acid sequence, 413 residues long: Eukaryotic initiation factor 4A-10 (413 aa).

A Q motif motif is present at residues 40–68 (DSFDAMGLQENLLRGIYAYGFEKPSAIQQ). Residues 71–241 (IVPFCKGLDV…RKFMNKPVRI (171 aa)) enclose the Helicase ATP-binding domain. 84–91 (AQSGTGKT) contributes to the ATP binding site. The short motif at 189-192 (DEAD) is the DEAD box element. The Helicase C-terminal domain occupies 252 to 413 (GIKQFYVNVD…ELPANVADLL (162 aa)).

It belongs to the DEAD box helicase family. eIF4A subfamily. EIF4F is a multi-subunit complex, the composition of which varies with external and internal environmental conditions. It is composed of at least EIF4A, EIF4E and EIF4G.

The catalysed reaction is ATP + H2O = ADP + phosphate + H(+). ATP-dependent RNA helicase which is a subunit of the eIF4F complex involved in cap recognition and is required for mRNA binding to ribosome. In the current model of translation initiation, eIF4A unwinds RNA secondary structures in the 5'-UTR of mRNAs which is necessary to allow efficient binding of the small ribosomal subunit, and subsequent scanning for the initiator codon. This chain is Eukaryotic initiation factor 4A-10, found in Nicotiana tabacum (Common tobacco).